The chain runs to 161 residues: 2-C-methyl-D-erythritol 2,4-cyclodiphosphate synthase (161 aa).

A divalent metal cation is bound by residues aspartate 10 and histidine 12. 4-CDP-2-C-methyl-D-erythritol 2-phosphate is bound by residues 10-12 (DVH) and 36-37 (HS). Position 44 (histidine 44) interacts with a divalent metal cation. Residues 58-60 (DIG), 63-67 (FPDTD), 102-108 (AQAPKMA), 134-137 (TTTE), phenylalanine 141, and arginine 144 contribute to the 4-CDP-2-C-methyl-D-erythritol 2-phosphate site.

This sequence belongs to the IspF family. As to quaternary structure, homotrimer. It depends on a divalent metal cation as a cofactor.

It carries out the reaction 4-CDP-2-C-methyl-D-erythritol 2-phosphate = 2-C-methyl-D-erythritol 2,4-cyclic diphosphate + CMP. The protein operates within isoprenoid biosynthesis; isopentenyl diphosphate biosynthesis via DXP pathway; isopentenyl diphosphate from 1-deoxy-D-xylulose 5-phosphate: step 4/6. In terms of biological role, involved in the biosynthesis of isopentenyl diphosphate (IPP) and dimethylallyl diphosphate (DMAPP), two major building blocks of isoprenoid compounds. Catalyzes the conversion of 4-diphosphocytidyl-2-C-methyl-D-erythritol 2-phosphate (CDP-ME2P) to 2-C-methyl-D-erythritol 2,4-cyclodiphosphate (ME-CPP) with a corresponding release of cytidine 5-monophosphate (CMP). The polypeptide is 2-C-methyl-D-erythritol 2,4-cyclodiphosphate synthase (Shewanella sediminis (strain HAW-EB3)).